The sequence spans 294 residues: Nucleotide-binding protein Swol_0262 (294 aa).

Glycine 15 to threonine 22 provides a ligand contact to ATP. Residue aspartate 65–glycine 68 participates in GTP binding.

It belongs to the RapZ-like family.

Functionally, displays ATPase and GTPase activities. In Syntrophomonas wolfei subsp. wolfei (strain DSM 2245B / Goettingen), this protein is Nucleotide-binding protein Swol_0262.